The chain runs to 249 residues: DNA polymerase sliding clamp (249 aa).

Belongs to the PCNA family. As to quaternary structure, homotrimer. The subunits circularize to form a toroid; DNA passes through its center. Replication factor C (RFC) is required to load the toroid on the DNA.

In terms of biological role, sliding clamp subunit that acts as a moving platform for DNA processing. Responsible for tethering the catalytic subunit of DNA polymerase and other proteins to DNA during high-speed replication. The polypeptide is DNA polymerase sliding clamp (Thermococcus sibiricus (strain DSM 12597 / MM 739)).